A 572-amino-acid chain; its full sequence is Na(+)/citrate cotransporter (572 aa).

Helical transmembrane passes span 13–33, 53–73, 80–100, 124–144, 218–238, 255–275, 315–335, and 357–377; these read SFAI…LIPD, VIPV…LKVL, IQYM…AVAV, LMLG…NTAA, SASI…VLLG, SWFG…WLWL, SLSY…ILWF, and HITD…IPSQ. Residue Asn-382 is glycosylated (N-linked (GlcNAc...) asparagine). 4 helical membrane-spanning segments follow: residues 410–430, 443–463, 491–511, and 532–552; these read VPWD…GCET, PLRL…VAMT, PLYV…LPVA, and TGLI…NTWG. N-linked (GlcNAc...) asparagine glycosylation is present at Asn-566.

It belongs to the SLC13A/DASS transporter (TC 2.A.47) family. NADC subfamily. As to quaternary structure, homodimer.

The protein localises to the cell membrane. It carries out the reaction citrate(out) + 4 Na(+)(out) = citrate(in) + 4 Na(+)(in). Inhibited by Li(+). Functionally, high-affinity sodium/citrate cotransporter that mediates citrate entry into cells, which is a critical participant of biochemical pathways. May function in various metabolic processes in which citrate has a critical role such as energy production (Krebs cycle), fatty acid synthesis, cholesterol synthesis, glycolysis, and gluconeogenesis. Transports citrate into the cell in a Na(+)-dependent manner, recognizing the trivalent form of citrate (physiological pH) rather than the divalent form. Can recognizes succinate as a substrate, but its affinity for succinate is several fold lower than for citrate. The stoichiometry is probably 4 Na(+) for each carboxylate, irrespective of whether the translocated substrate is divalent or trivalent, rendering the process electrogenic. Involved in the regulation of citrate levels in the brain. This chain is Na(+)/citrate cotransporter (Slc13a5), found in Mus musculus (Mouse).